Here is a 136-residue protein sequence, read N- to C-terminus: uncharacterized protein (136 aa).

A helical transmembrane segment spans residues 7 to 27 (ANVLAILLVSLFLINGLVFLS).

It localises to the membrane. This is an uncharacterized protein from Mycoplasma pneumoniae (strain ATCC 29342 / M129 / Subtype 1) (Mycoplasmoides pneumoniae).